The primary structure comprises 177 residues: Nucleoside-triphosphatase THEP1 (177 aa).

ATP contacts are provided by residues 10-17 (GKPGIGKT) and 101-108 (CLVIDEIG).

This sequence belongs to the THEP1 NTPase family.

It carries out the reaction a ribonucleoside 5'-triphosphate + H2O = a ribonucleoside 5'-diphosphate + phosphate + H(+). Functionally, has nucleotide phosphatase activity towards ATP, GTP, CTP, TTP and UTP. May hydrolyze nucleoside diphosphates with lower efficiency. In Natranaerobius thermophilus (strain ATCC BAA-1301 / DSM 18059 / JW/NM-WN-LF), this protein is Nucleoside-triphosphatase THEP1.